The chain runs to 309 residues: MSLRVHTHSPSTQGDMAFNLTILSLTELLSLGGLLGNGVALWLLNQNVYRNPFSIYLLDVACADLIFLCCHMVAIIPELLQDQLNFPEFVHISLIMLRFFCYIVGLSLLVAISTEQCLATLFPSGYLCRRPRYLTTCVCAFIWVLCLLLDLLLSGACTQFFGAPSYHLCGMLWLVVAVLLAALCCTMCVTSLLLLLRVERGPERHQPRGFPTLVLLVILLFLFCGLPFGIFWLSKNLSWHTPLYFYHFSFFMASVHSAAKPAIYFFLGSTPGQRFQEPLRLVLQRALGDEAELGAVREASQGGLVDMTV.

Residues 1 to 21 (MSLRVHTHSPSTQGDMAFNLT) are Extracellular-facing. Asn19 carries N-linked (GlcNAc...) asparagine glycosylation. Residues 22–42 (ILSLTELLSLGGLLGNGVALW) form a helical membrane-spanning segment. At 43 to 59 (LLNQNVYRNPFSIYLLD) the chain is on the cytoplasmic side. Residues 60-80 (VACADLIFLCCHMVAIIPELL) traverse the membrane as a helical segment. Over 81–91 (QDQLNFPEFVH) the chain is Extracellular. The helical transmembrane segment at 92-112 (ISLIMLRFFCYIVGLSLLVAI) threads the bilayer. The Cytoplasmic portion of the chain corresponds to 113 to 132 (STEQCLATLFPSGYLCRRPR). The chain crosses the membrane as a helical span at residues 133-153 (YLTTCVCAFIWVLCLLLDLLL). Topologically, residues 154–168 (SGACTQFFGAPSYHL) are extracellular. Residues 169-189 (CGMLWLVVAVLLAALCCTMCV) traverse the membrane as a helical segment. Residues 190–212 (TSLLLLLRVERGPERHQPRGFPT) lie on the Cytoplasmic side of the membrane. Residues 213 to 233 (LVLLVILLFLFCGLPFGIFWL) traverse the membrane as a helical segment. Residues 234 to 247 (SKNLSWHTPLYFYH) lie on the Extracellular side of the membrane. Residue Asn236 is glycosylated (N-linked (GlcNAc...) asparagine). A helical membrane pass occupies residues 248 to 268 (FSFFMASVHSAAKPAIYFFLG). Residues 269 to 309 (STPGQRFQEPLRLVLQRALGDEAELGAVREASQGGLVDMTV) are Cytoplasmic-facing.

The protein belongs to the G-protein coupled receptor 1 family. Mas subfamily.

Its subcellular location is the cell membrane. Functionally, orphan receptor. May regulate nociceptor function and/or development, including the sensation or modulation of pain. The sequence is that of Mas-related G-protein coupled receptor member E (Mrgpre) from Rattus norvegicus (Rat).